The following is a 180-amino-acid chain: Crossover junction endodeoxyribonuclease RuvC (180 aa).

Residues Asp7, Glu66, and Asp138 contribute to the active site. The Mg(2+) site is built by Asp7, Glu66, and Asp138.

The protein belongs to the RuvC family. In terms of assembly, homodimer which binds Holliday junction (HJ) DNA. The HJ becomes 2-fold symmetrical on binding to RuvC with unstacked arms; it has a different conformation from HJ DNA in complex with RuvA. In the full resolvosome a probable DNA-RuvA(4)-RuvB(12)-RuvC(2) complex forms which resolves the HJ. Mg(2+) serves as cofactor.

Its subcellular location is the cytoplasm. It catalyses the reaction Endonucleolytic cleavage at a junction such as a reciprocal single-stranded crossover between two homologous DNA duplexes (Holliday junction).. Its function is as follows. The RuvA-RuvB-RuvC complex processes Holliday junction (HJ) DNA during genetic recombination and DNA repair. Endonuclease that resolves HJ intermediates. Cleaves cruciform DNA by making single-stranded nicks across the HJ at symmetrical positions within the homologous arms, yielding a 5'-phosphate and a 3'-hydroxyl group; requires a central core of homology in the junction. The consensus cleavage sequence is 5'-(A/T)TT(C/G)-3'. Cleavage occurs on the 3'-side of the TT dinucleotide at the point of strand exchange. HJ branch migration catalyzed by RuvA-RuvB allows RuvC to scan DNA until it finds its consensus sequence, where it cleaves and resolves the cruciform DNA. This chain is Crossover junction endodeoxyribonuclease RuvC, found in Herminiimonas arsenicoxydans.